The sequence spans 345 residues: Anthranilate phosphoribosyltransferase (345 aa).

5-phospho-alpha-D-ribose 1-diphosphate-binding positions include glycine 84, 87–88 (GD), threonine 92, 94–97 (NIST), 112–120 (KHGNRSVSS), and serine 124. Glycine 84 contributes to the anthranilate binding site. Serine 96 is a binding site for Mg(2+). Asparagine 115 contributes to the anthranilate binding site. Arginine 170 lines the anthranilate pocket. The Mg(2+) site is built by aspartate 229 and glutamate 230.

It belongs to the anthranilate phosphoribosyltransferase family. Homodimer. Mg(2+) serves as cofactor.

It catalyses the reaction N-(5-phospho-beta-D-ribosyl)anthranilate + diphosphate = 5-phospho-alpha-D-ribose 1-diphosphate + anthranilate. It functions in the pathway amino-acid biosynthesis; L-tryptophan biosynthesis; L-tryptophan from chorismate: step 2/5. In terms of biological role, catalyzes the transfer of the phosphoribosyl group of 5-phosphorylribose-1-pyrophosphate (PRPP) to anthranilate to yield N-(5'-phosphoribosyl)-anthranilate (PRA). This Xanthomonas campestris pv. campestris (strain B100) protein is Anthranilate phosphoribosyltransferase.